Here is a 128-residue protein sequence, read N- to C-terminus: Cytochrome c-type biogenesis protein CcmE (128 aa).

The Cytoplasmic portion of the chain corresponds to 1-8; it reads MQKRVRNR. Residues 9–29 traverse the membrane as a helical; Signal-anchor for type II membrane protein segment; it reads LITIIICFCSAALGISIVLYN. Over 30-128 the chain is Periplasmic; sequence LEKNIVFFLP…KHDENYRPPS (99 aa). Residues histidine 120 and tyrosine 124 each contribute to the heme site.

The protein belongs to the CcmE/CycJ family.

Its subcellular location is the cell inner membrane. Heme chaperone required for the biogenesis of c-type cytochromes. Transiently binds heme delivered by CcmC and transfers the heme to apo-cytochromes in a process facilitated by CcmF and CcmH. The chain is Cytochrome c-type biogenesis protein CcmE from Rickettsia felis (strain ATCC VR-1525 / URRWXCal2) (Rickettsia azadi).